We begin with the raw amino-acid sequence, 513 residues long: ATP synthase subunit alpha (513 aa).

Residue 169-176 participates in ATP binding; that stretch reads GDRQTGKT.

It belongs to the ATPase alpha/beta chains family. In terms of assembly, F-type ATPases have 2 components, CF(1) - the catalytic core - and CF(0) - the membrane proton channel. CF(1) has five subunits: alpha(3), beta(3), gamma(1), delta(1), epsilon(1). CF(0) has three main subunits: a(1), b(2) and c(9-12). The alpha and beta chains form an alternating ring which encloses part of the gamma chain. CF(1) is attached to CF(0) by a central stalk formed by the gamma and epsilon chains, while a peripheral stalk is formed by the delta and b chains.

It localises to the cell inner membrane. The catalysed reaction is ATP + H2O + 4 H(+)(in) = ADP + phosphate + 5 H(+)(out). In terms of biological role, produces ATP from ADP in the presence of a proton gradient across the membrane. The alpha chain is a regulatory subunit. This is ATP synthase subunit alpha from Halorhodospira halophila (strain DSM 244 / SL1) (Ectothiorhodospira halophila (strain DSM 244 / SL1)).